The following is a 373-amino-acid chain: Type II secretion system protein L (373 aa).

Residues 1–214 (MTAWRDTLGR…RRSDPMQRWN (214 aa)) are Cytoplasmic-facing. A helical transmembrane segment spans residues 215-233 (LLLAVAALVLLAVAGWLLL). Over 234–373 (DNRRQAADDL…AKEAADAAQR (140 aa)) the chain is Periplasmic.

The protein belongs to the GSP L family. Type II secretion system is composed of four main components: the outer membrane complex, the inner membrane complex, the cytoplasmic secretion ATPase and the periplasm-spanning pseudopilus. Forms homodimers. Interacts with XpsM/GspM. Interacts with XpsE/GspE and XpsF/GspF.

It is found in the cell inner membrane. Functionally, inner membrane component of the type II secretion system required for the energy-dependent secretion of extracellular factors such as proteases and toxins from the periplasm. Plays a role in the complex assembly and recruits XpsM resulting in a stable complex in the inner membrane. Provides thus a link between the energy-providing XpsE protein in the cytoplasm and the rest of the T2SS machinery. This Xanthomonas campestris pv. campestris (strain ATCC 33913 / DSM 3586 / NCPPB 528 / LMG 568 / P 25) protein is Type II secretion system protein L (pefL).